Here is a 142-residue protein sequence, read N- to C-terminus: Large ribosomal subunit protein uL11 (142 aa).

The protein belongs to the universal ribosomal protein uL11 family. Part of the ribosomal stalk of the 50S ribosomal subunit. Interacts with L10 and the large rRNA to form the base of the stalk. L10 forms an elongated spine to which L12 dimers bind in a sequential fashion forming a multimeric L10(L12)X complex. One or more lysine residues are methylated.

Its function is as follows. Forms part of the ribosomal stalk which helps the ribosome interact with GTP-bound translation factors. The sequence is that of Large ribosomal subunit protein uL11 from Erwinia tasmaniensis (strain DSM 17950 / CFBP 7177 / CIP 109463 / NCPPB 4357 / Et1/99).